The sequence spans 106 residues: 3-phenylpropionate/cinnamic acid dioxygenase ferredoxin subunit (106 aa).

Residues 4–99 (IYACPVADVP…VHVEGGDIFI (96 aa)) enclose the Rieske domain. The [2Fe-2S] cluster site is built by Cys-42, His-44, Cys-62, and His-65.

Belongs to the bacterial ring-hydroxylating dioxygenase ferredoxin component family. This dioxygenase system consists of four proteins: the two subunits of the hydroxylase component (HcaE and HcaF), a ferredoxin (HcaC) and a ferredoxin reductase (HcaD). The cofactor is [2Fe-2S] cluster.

The protein operates within aromatic compound metabolism; 3-phenylpropanoate degradation. Functionally, part of the multicomponent 3-phenylpropionate dioxygenase, that converts 3-phenylpropionic acid (PP) and cinnamic acid (CI) into 3-phenylpropionate-dihydrodiol (PP-dihydrodiol) and cinnamic acid-dihydrodiol (CI-dihydrodiol), respectively. This protein seems to be a 2Fe-2S ferredoxin. The sequence is that of 3-phenylpropionate/cinnamic acid dioxygenase ferredoxin subunit from Shigella flexneri serotype 5b (strain 8401).